Consider the following 1562-residue polypeptide: MVKKKKFKTKNIQNPPFSSQNSSHLFFSLKKKEEKESTPEVFVIDDHFNTFKTPKALKFRTPIFFNVSFDKNTLKTVIAWFLDQYGGKATVDLVETLKQVGFHQATRAGVSLGLEDLQIPPQKASFLSAASVSGVEAAQALETGNLTSVEKSQRLIDTWNKTSESLRQAAVHNFRATNPVNPVYMMAFSGARGNISQVRQLVAMRGLMADPQGAILEFPIQSNFREGLTITEYLLSCYGARKGLVDTALRTASAGYLTRRLVDAVQHVVIYTKNCKTEKGITFKGLHIEQNLLGRVLLKDVILNTTTVIPKDTLVSSSLAKKLAAINQKIFVRSPLTCQTEKTVCQLCYGLDLAQGKLVCFGEAVGIIAAQSIGEPGTQLTMRTFHTGGVGVFSEQAMKSFPAPFDGKIEFQEALPGRFVRTPYGKIVYLLKHTGTNPKQVLLRVVSSSLTMRPLVYEILHQDVPAGSLLWVKQGEDVRTGQLLVQGSRLQKSKQKMPESTHIVRTPFSGELFFEHMPIVSLEKIITRGPRTNPKEEFSPIKVFLKDLGRFWVFSSFIQKQTFSFLDQKKGKANSFFFKGDLVSAETPLSQYNLQIPVRGHLKKLGSSVVLAQTVFKFCFSKIYYFSKFYFLVENQNLIASTTTLNFTSLTWYPFFNQFETSGYYVDLSFSSDSEVLKTTELTKVKSETYDFTKNGGFFTSHQSFVGSTTRVFLLKTFEFFSAASKQTQKTALERLPFVDSMSFSLEKIQLKKQNQKRKENPLFSLEVGKVKRNTQQRLPQFGFMVTCEENSLSRKGIFQIKKAQEKNWSHKKTFQLSFLLNPKKRKKPLKKHFMCSSLFLEKAVKRAQTTFGIQTETKLIEKKCSWFSVSKNFTDFSSQLTGIVLEPGKHMESFSFQHSYVSVNLISRENVFLVKSKTKRSQFSYVLKDLLSSSRFCHKVFEKNFSEQKMESVEKISQIFSSQTESFFSRNNQLLSFFSQKKRIKNKLFFHSQLNFPSKMPRRSDVLNSSKLLFFTREFLSDFSFYKRKELIQKRERKPHTLQNIKVKNKKFLQVIQPCFQLKKKRCLSNLFFLQKLSYQIFPERKFFYETWLNQSSFDFSLPSPFSTKQFKTTGFFSKNELQKASFDFQPSFLSQKISSSSQLTLRGSWVSMTNSFKIHFEVKTPKFFGKIEEFQQKKFFDKKLKFGIQSPSKSLSKALSFGIPIPEFSLAVSRKIIFEKAHTYIFQSFQCRQVLPKVPITQVFLKSKTVGEFQRIQLKNQKGSSSFLRAEDTVTFLLPSLVPKKQSFLKKEEKVLVSCGQRIRWGQEIFPGFASSLSGRILDITATQITVRKALPFLGSRRGLVHVAQNDLLQKNHILMTLRSKQLQTEDIVQGIPKIEQLFEARETKDGEIIRYNMHFRLNSFFSLAKRVKPFLEAFDLSLLYIQRFLVKTLLEAYSNQGVNIAEKHVEVVVRQMTARVRITFGKDTSLLPGEFIQLRLLEEINRSLVEAKKEPALYEPVILGLTKSVLQSESFLLAASFQQVSKVLVRSALATKTDFLRGLMKPLYVASLSQREQEL.

The tract at residues 1-22 (MVKKKKFKTKNIQNPPFSSQNS) is disordered. The segment covering 11–22 (NIQNPPFSSQNS) has biased composition (polar residues). The Zn(2+) site is built by Cys-275, Cys-338, Cys-345, and Cys-348.

Belongs to the RNA polymerase beta' chain family. RpoC2 subfamily. In plastids the minimal PEP RNA polymerase catalytic core is composed of four subunits: alpha, beta, beta', and beta''. When a (nuclear-encoded) sigma factor is associated with the core the holoenzyme is formed, which can initiate transcription. The cofactor is Zn(2+).

The protein resides in the plastid. It is found in the chloroplast. It carries out the reaction RNA(n) + a ribonucleoside 5'-triphosphate = RNA(n+1) + diphosphate. Functionally, DNA-dependent RNA polymerase catalyzes the transcription of DNA into RNA using the four ribonucleoside triphosphates as substrates. The protein is DNA-directed RNA polymerase subunit beta'' of Chlorella vulgaris (Green alga).